An 842-amino-acid polypeptide reads, in one-letter code: Protein translocase subunit SecA (842 aa).

ATP is bound by residues glutamine 85, 103 to 107 (GEGKT), and aspartate 493. Zn(2+) contacts are provided by cysteine 825, cysteine 827, cysteine 836, and histidine 837.

This sequence belongs to the SecA family. As to quaternary structure, monomer and homodimer. Part of the essential Sec protein translocation apparatus which comprises SecA, SecYEG and auxiliary proteins SecDF. Other proteins may also be involved. The cofactor is Zn(2+).

The protein resides in the cell membrane. It is found in the cytoplasm. The catalysed reaction is ATP + H2O + cellular proteinSide 1 = ADP + phosphate + cellular proteinSide 2.. In terms of biological role, part of the Sec protein translocase complex. Interacts with the SecYEG preprotein conducting channel. Has a central role in coupling the hydrolysis of ATP to the transfer of proteins into and across the cell membrane, serving as an ATP-driven molecular motor driving the stepwise translocation of polypeptide chains across the membrane. The sequence is that of Protein translocase subunit SecA from Streptococcus uberis (strain ATCC BAA-854 / 0140J).